We begin with the raw amino-acid sequence, 1207 residues long: RNA-binding protein 20 (1207 aa).

A disordered region spans residues 1 to 58 (MVLAAAMSQDADPSGPEQPDRDACIVPGVQGPPAPQGQQGMQPLPPPLPPPPQPQSSL). Pro residues predominate over residues 43 to 54 (PLPPPLPPPPQP). The U1-type zinc finger occupies 412–446 (HLPHICSICDKKVFDLKDWELHVKGKLHAQKCLLF). An RRM domain is found at 521–596 (RVVHICNLPE…EKLLIRMSTR (76 aa)). Over residues 625–637 (LREADRYGPERPR) the composition is skewed to basic and acidic residues. Disordered stretches follow at residues 625–686 (LREA…NGED), 722–896 (EKYL…MEEL), and 951–1110 (QGET…AELK). Residues 631 to 650 (YGPERPRSRSPMSRSLSPRS) form an RS region. Phosphoserine occurs at positions 638, 640, 643, 645, and 652. The span at 639-650 (RSPMSRSLSPRS) shows a compositional bias: low complexity. Basic and acidic residues predominate over residues 668 to 686 (YAWRDEDRETVPRRENGED). The residue at position 729 (Ser-729) is a Phosphoserine. Basic and acidic residues-rich tracts occupy residues 740-759 (KGRE…DKHP), 772-789 (RKEE…PEDS), and 796-836 (EPKV…RGAE). Residue Ser-789 is modified to Phosphoserine. The span at 839-848 (AGTEEQEGME) shows a compositional bias: acidic residues. Ser-853 and Ser-864 each carry phosphoserine. A compositionally biased stretch (polar residues) spans 853-863 (SVGTQQEGTES). Over residues 867-876 (ENTRTKKGQD) the composition is skewed to basic and acidic residues. Phosphoserine occurs at positions 879, 881, and 963. Residues 970–979 (VPSTSTSCPN) show a composition bias toward polar residues. Phosphoserine is present on Ser-999. Basic and acidic residues predominate over residues 1011-1022 (YEKEARGAEGSD). 7 positions are modified to phosphoserine: Ser-1034, Ser-1046, Ser-1057, Ser-1066, Ser-1078, Ser-1096, and Ser-1101. Positions 1050-1072 (DDCKARGSPEDGPHEVSPLEEKA) are enriched in basic and acidic residues. Positions 1073–1102 (SPTTESDLQSQACQENSRYTETRSLNSRSP) are enriched in polar residues. A Matrin-type zinc finger spans residues 1141-1172 (FYCKLCGLFYTSEEAAKVSHCRSTVHYRNLQK). The disordered stretch occupies residues 1181 to 1207 (GLKETEGVDSPSPERSGIGPHLERKKL). 2 positions are modified to phosphoserine: Ser-1190 and Ser-1192.

In terms of assembly, associates with components of the U1 and U2 U1 small nuclear ribonucleoprotein complexes. Phosphorylation regulates the subcellular localization. Phosphorylation of Ser-638 and Ser-640 in the RS (arginine/serine-rich) region promotes nuclear localization of the protein. In contrast, phosphorylation of the C-terminal disordered region promotes localization to cytoplasmic ribonucleoprotein granules.

It localises to the nucleus. It is found in the cytoplasm. The protein resides in the cytoplasmic ribonucleoprotein granule. In terms of biological role, RNA-binding protein that acts as a regulator of mRNA splicing of a subset of genes encoding key structural proteins involved in cardiac development, such as TTN (Titin), CACNA1C, CAMK2D or PDLIM5/ENH. Acts as a repressor of mRNA splicing: specifically binds the 5'UCUU-3' motif that is predominantly found within intronic sequences of pre-mRNAs, leading to the exclusion of specific exons in target transcripts. RBM20-mediated exon skipping is hormone-dependent and is essential for TTN isoform transition in both cardiac and skeletal muscles. RBM20-mediated exon skipping of TTN provides substrates for the formation of circular RNA (circRNAs) from the TTN transcripts. Together with RBM24, promotes the expression of short isoforms of PDLIM5/ENH in cardiomyocytes. This is RNA-binding protein 20 from Rattus norvegicus (Rat).